The sequence spans 630 residues: Pentatricopeptide repeat-containing protein At2g03880, mitochondrial (630 aa).

The transit peptide at Met-1–Ala-76 directs the protein to the mitochondrion. 11 PPR repeats span residues Asp-60–Pro-94, Met-95–Arg-125, Asn-126–Pro-160, Asn-161–Ser-192, Asp-193–Gly-223, Asp-224–Ala-258, Glu-259–Tyr-289, Asp-292–Arg-322, Asp-323–Pro-357, Asn-358–Leu-388, and Val-394–Glu-424. The interval Thr-429–Asn-504 is type E motif. The type E(+) motif stretch occupies residues Lys-505 to Thr-535. Residues Gly-536 to Trp-630 form a type DYW motif region.

Belongs to the PPR family. PCMP-H subfamily.

It localises to the mitochondrion. The polypeptide is Pentatricopeptide repeat-containing protein At2g03880, mitochondrial (PCMP-H44) (Arabidopsis thaliana (Mouse-ear cress)).